The sequence spans 593 residues: Meiosis-specific APC/C activator protein AMA1 (593 aa).

Over residues 1-11 the composition is skewed to basic residues; that stretch reads MATPHLYHRYN. Residues 1–26 are disordered; sequence MATPHLYHRYNSKSSNKNINSSGNST. The segment covering 12–25 has biased composition (low complexity); it reads SKSSNKNINSSGNS. The C-box signature appears at 29 to 35; sequence DRFIPKS. The span at 94–109 shows a compositional bias: low complexity; the sequence is SSISSSSESQVTRSGS. A disordered region spans residues 94 to 125; it reads SSISSSSESQVTRSGSARASRNDYSKLTKEQK. A compositionally biased stretch (basic and acidic residues) spans 113 to 125; the sequence is SRNDYSKLTKEQK. WD repeat units follow at residues 226 to 264, 271 to 310, 323 to 364, 388 to 427, 432 to 474, and 525 to 564; these read RNDF…VSIL, EKRD…HSSN, ESFK…FPIK, AQAQ…KPIK, PHKA…LLDE, and PNPL…EEII.

The protein belongs to the WD repeat CDC20/Fizzy family. In terms of assembly, interacts with CDC16.

Its function is as follows. Activator protein that regulates the ubiquitin ligase activity and substrate specificity of the anaphase promoting complex/cyclosome (APC/C). Required for the ubiquitination and subsequent degradation of the B-type cyclin CLB1 by the APC/C complex during meiosis. Required for meiosis I, late meiotic gene expression and spore wall assembly. In Saccharomyces cerevisiae (strain ATCC 204508 / S288c) (Baker's yeast), this protein is Meiosis-specific APC/C activator protein AMA1 (AMA1).